The chain runs to 487 residues: Probable Xaa-Pro aminopeptidase MGYG_06974 (487 aa).

Positions 255, 266, 414, and 458 each coordinate Mn(2+).

This sequence belongs to the peptidase M24B family. Requires Mn(2+) as cofactor.

It carries out the reaction Release of any N-terminal amino acid, including proline, that is linked to proline, even from a dipeptide or tripeptide.. In terms of biological role, catalyzes the removal of a penultimate prolyl residue from the N-termini of peptides. This chain is Probable Xaa-Pro aminopeptidase MGYG_06974, found in Arthroderma gypseum (strain ATCC MYA-4604 / CBS 118893) (Microsporum gypseum).